The sequence spans 95 residues: Aspartyl/glutamyl-tRNA(Asn/Gln) amidotransferase subunit C (95 aa).

Belongs to the GatC family. In terms of assembly, heterotrimer of A, B and C subunits.

It carries out the reaction L-glutamyl-tRNA(Gln) + L-glutamine + ATP + H2O = L-glutaminyl-tRNA(Gln) + L-glutamate + ADP + phosphate + H(+). The catalysed reaction is L-aspartyl-tRNA(Asn) + L-glutamine + ATP + H2O = L-asparaginyl-tRNA(Asn) + L-glutamate + ADP + phosphate + 2 H(+). Its function is as follows. Allows the formation of correctly charged Asn-tRNA(Asn) or Gln-tRNA(Gln) through the transamidation of misacylated Asp-tRNA(Asn) or Glu-tRNA(Gln) in organisms which lack either or both of asparaginyl-tRNA or glutaminyl-tRNA synthetases. The reaction takes place in the presence of glutamine and ATP through an activated phospho-Asp-tRNA(Asn) or phospho-Glu-tRNA(Gln). The chain is Aspartyl/glutamyl-tRNA(Asn/Gln) amidotransferase subunit C from Caldanaerobacter subterraneus subsp. tengcongensis (strain DSM 15242 / JCM 11007 / NBRC 100824 / MB4) (Thermoanaerobacter tengcongensis).